Consider the following 334-residue polypeptide: Ornithine carbamoyltransferase subunit F (334 aa).

Carbamoyl phosphate-binding positions include 56-59 (STRT), glutamine 83, arginine 107, and 134-137 (HPTQ). L-ornithine contacts are provided by residues asparagine 168, aspartate 232, and 236–237 (SM). Carbamoyl phosphate-binding positions include 274–275 (CL) and arginine 320.

It belongs to the aspartate/ornithine carbamoyltransferase superfamily. OTCase family. In E.coli strain K12, trimer of identical or non-identical chains are composed of ArgI (I) and/or ArgF (F). The trimer has the following composition: FFI, FFF, FII, III. E.coli strains B and W, which are known to contain only ArgI, produce only a trimer of identical chains (III).

Its subcellular location is the cytoplasm. It carries out the reaction carbamoyl phosphate + L-ornithine = L-citrulline + phosphate + H(+). Its pathway is amino-acid biosynthesis; L-arginine biosynthesis; L-arginine from L-ornithine and carbamoyl phosphate: step 1/3. Its function is as follows. Reversibly catalyzes the transfer of the carbamoyl group from carbamoyl phosphate (CP) to the N(epsilon) atom of ornithine (ORN) to produce L-citrulline, which is a substrate for argininosuccinate synthetase, the enzyme involved in the final step in arginine biosynthesis. The protein is Ornithine carbamoyltransferase subunit F of Escherichia coli (strain K12).